The chain runs to 315 residues: O-antigen chain rhamnosyltransferase WbaN (315 aa).

This sequence belongs to the glycosyltransferase 2 family.

The catalysed reaction is alpha-D-galactosyl-di-trans,octa-cis-undecaprenyl diphosphate + dTDP-beta-L-rhamnose = alpha-L-rhamnosyl-(1-&gt;3)-alpha-D-galactosyl-1-diphospho-di-trans,octa-cis-undecaprenol + dTDP + H(+). It functions in the pathway bacterial outer membrane biogenesis; LPS O-antigen biosynthesis. Rhamnosyltransferase involved in the biosynthesis of the repeat unit of the lipopolysaccharide (LPS) O-antigen region. Catalyzes the addition of a rhamnose to the galactosyl-undecaprenyl diphosphate intermediate. In Salmonella anatum, this protein is O-antigen chain rhamnosyltransferase WbaN.